The chain runs to 148 residues: Small ribosomal subunit protein uS7m (148 aa).

Belongs to the universal ribosomal protein uS7 family. In terms of assembly, part of the small ribosomal subunit.

It is found in the mitochondrion. Its function is as follows. One of the primary rRNA binding proteins, it binds directly to 18S rRNA where it nucleates assembly of the head domain of the small subunit. The sequence is that of Small ribosomal subunit protein uS7m (RPS7) from Arabidopsis thaliana (Mouse-ear cress).